Here is a 370-residue protein sequence, read N- to C-terminus: Phospho-N-acetylmuramoyl-pentapeptide-transferase (370 aa).

10 helical membrane-spanning segments follow: residues 29–49 (AGLT…SFLL), 70–90 (GTPT…TLLW), 93–113 (LSNW…GLGF), 133–153 (KFIV…YYTG), 177–197 (GPVW…LIGS), 209–229 (GLAS…AYVS), 251–271 (VFLA…CHPA), 273–293 (VFMG…VAIM), 298–318 (ILLV…ILQV), and 349–369 (VIRF…TLKI).

It belongs to the glycosyltransferase 4 family. MraY subfamily. Requires Mg(2+) as cofactor.

The protein resides in the cell inner membrane. It catalyses the reaction UDP-N-acetyl-alpha-D-muramoyl-L-alanyl-gamma-D-glutamyl-meso-2,6-diaminopimeloyl-D-alanyl-D-alanine + di-trans,octa-cis-undecaprenyl phosphate = di-trans,octa-cis-undecaprenyl diphospho-N-acetyl-alpha-D-muramoyl-L-alanyl-D-glutamyl-meso-2,6-diaminopimeloyl-D-alanyl-D-alanine + UMP. The protein operates within cell wall biogenesis; peptidoglycan biosynthesis. Catalyzes the initial step of the lipid cycle reactions in the biosynthesis of the cell wall peptidoglycan: transfers peptidoglycan precursor phospho-MurNAc-pentapeptide from UDP-MurNAc-pentapeptide onto the lipid carrier undecaprenyl phosphate, yielding undecaprenyl-pyrophosphoryl-MurNAc-pentapeptide, known as lipid I. This Leptospira biflexa serovar Patoc (strain Patoc 1 / Ames) protein is Phospho-N-acetylmuramoyl-pentapeptide-transferase.